The following is a 481-amino-acid chain: OTU domain-containing protein 1 (481 aa).

Disordered stretches follow at residues 18–60 (PTAA…AAAE) and 202–282 (LAAA…IVSR). Over residues 38-58 (PPGAAGAAPEPETGECQPAAA) the composition is skewed to low complexity. Positions 225-257 (GEEHLAERGPRGWERGGDRCDAPGGDAARRPDP) are enriched in basic and acidic residues. Residues 261 to 281 (APPAGSIEAAPSSAAEPVIVS) are compositionally biased toward low complexity. Residues 309–438 (KYRFHIIPDG…NGHYDAVFDH (130 aa)) form the OTU domain. Residues 314 to 320 (IIPDGNC) form a cys-loop region. Aspartate 317 is a catalytic residue. Residue cysteine 320 is the Nucleophile of the active site. Residues 369 to 379 (AAQDGAWAGYP) are his-loop. The interval 426–431 (WLSNGH) is variable-loop. Histidine 431 is a catalytic residue. One can recognise a UIM domain in the interval 457–476 (KRDEELAKSMAISLSKMYIE).

It catalyses the reaction Thiol-dependent hydrolysis of ester, thioester, amide, peptide and isopeptide bonds formed by the C-terminal Gly of ubiquitin (a 76-residue protein attached to proteins as an intracellular targeting signal).. Functionally, deubiquitinating enzyme that specifically hydrolyzes 'Lys-63'-linked polyubiquitin to monoubiquitin. Required for the stability and translation of a subset mRNAs with a high abundance of rare codons by mediating deubiquitination of 40S ribosomal protein RPS10/eS10, thereby antagonizing ZNF598-mediated 40S ubiquitination. The abundance of rare codons in mRNAs can limit the translation rate and can lead to ribosome collisions that trigger activation of ribosome quality control (RQC) pathway by ZNF598. OTUD1-mediated deubiquitination prevents activation of the RQC and subsequent dissociation of ribosomes and stimulates formation of polysomes and translation. The sequence is that of OTU domain-containing protein 1 from Homo sapiens (Human).